A 306-amino-acid polypeptide reads, in one-letter code: Probable GTP 3',8-cyclase (306 aa).

Residues 5–232 form the Radical SAM core domain; that stretch reads RFGRPVTNLR…RRRKYFLPVD (228 aa). Residue Arg14 participates in GTP binding. Positions 21 and 25 each coordinate [4Fe-4S] cluster. Residue Tyr27 coordinates S-adenosyl-L-methionine. Cys28 is a [4Fe-4S] cluster binding site. Lys61 contacts GTP. Gly65 lines the S-adenosyl-L-methionine pocket. Thr90 lines the GTP pocket. Ser114 is an S-adenosyl-L-methionine binding site. Lys150 serves as a coordination point for GTP. S-adenosyl-L-methionine is bound at residue Met189. The [4Fe-4S] cluster site is built by Cys250 and Cys253. 255–257 lines the GTP pocket; that stretch reads RLR. Cys267 is a binding site for [4Fe-4S] cluster.

This sequence belongs to the radical SAM superfamily. MoaA family. [4Fe-4S] cluster is required as a cofactor.

It carries out the reaction GTP + AH2 + S-adenosyl-L-methionine = (8S)-3',8-cyclo-7,8-dihydroguanosine 5'-triphosphate + 5'-deoxyadenosine + L-methionine + A + H(+). Its pathway is cofactor biosynthesis; molybdopterin biosynthesis. Catalyzes the cyclization of GTP to (8S)-3',8-cyclo-7,8-dihydroguanosine 5'-triphosphate. The chain is Probable GTP 3',8-cyclase from Pyrococcus abyssi (strain GE5 / Orsay).